Reading from the N-terminus, the 333-residue chain is MSAVLDKGSLVDVFSSPSVVFNQIREGYCAEFIVEPLRVGFGLTIGNAMRRVLLSSLSGFAISAVGIKGLTHEFSCIPGVREDFADLALNLKKVVLKSISGATCGNLHLSVTDGGAVFSNMISPSHDFEVVNGDLLICNVAEGVSLEMEMKVSSGFGYVSSVSVRKDEYDLEGAVPIDAIYNPVRAVNFTVKPTSAGSFAGHDKLILYVETNGAMDPKTAVLEASKILSTQARCFLNIADPEHRVHGVPCGVSTSDRNDASDLLSARIDRLYLSARARKCLNGENIVYIRDLVSRTEADLLKAPNFGRRSLEEVKKELFSKGLSLGMNLDSHG.

An alpha N-terminal domain (alpha-NTD) region spans residues 1–239 (MSAVLDKGSL…TQARCFLNIA (239 aa)). Residues 259–333 (DASDLLSARI…SLGMNLDSHG (75 aa)) form an alpha C-terminal domain (alpha-CTD) region.

It belongs to the RNA polymerase alpha chain family. As to quaternary structure, homodimer. The RNAP catalytic core consists of 2 alpha, 1 beta, 1 beta' and 1 omega subunit. When a sigma factor is associated with the core the holoenzyme is formed, which can initiate transcription.

The enzyme catalyses RNA(n) + a ribonucleoside 5'-triphosphate = RNA(n+1) + diphosphate. Its function is as follows. DNA-dependent RNA polymerase catalyzes the transcription of DNA into RNA using the four ribonucleoside triphosphates as substrates. The sequence is that of DNA-directed RNA polymerase subunit alpha from Neorickettsia sennetsu (strain ATCC VR-367 / Miyayama) (Ehrlichia sennetsu).